A 401-amino-acid polypeptide reads, in one-letter code: Argininosuccinate synthase (401 aa).

An ATP-binding site is contributed by 9–17; it reads AYSGGLDTS. Tyrosine 87 contributes to the L-citrulline binding site. Glycine 117 contacts ATP. L-aspartate is bound by residues threonine 119, asparagine 123, and aspartate 124. Position 123 (asparagine 123) interacts with L-citrulline. The L-citrulline site is built by arginine 127, serine 176, serine 185, glutamate 261, and tyrosine 273.

This sequence belongs to the argininosuccinate synthase family. Type 1 subfamily. In terms of assembly, homotetramer.

Its subcellular location is the cytoplasm. The enzyme catalyses L-citrulline + L-aspartate + ATP = 2-(N(omega)-L-arginino)succinate + AMP + diphosphate + H(+). The protein operates within amino-acid biosynthesis; L-arginine biosynthesis; L-arginine from L-ornithine and carbamoyl phosphate: step 2/3. The polypeptide is Argininosuccinate synthase (Prosthecochloris aestuarii (strain DSM 271 / SK 413)).